A 124-amino-acid chain; its full sequence is p53-regulated apoptosis-inducing protein 1 (124 aa).

Polar residues predominate over residues 1–16 (MGSSSEASFRSAQASC). A disordered region spans residues 1-46 (MGSSSEASFRSAQASCSGARRQGLGRGDQNLSVMPPNGRAQTHTPG).

In terms of tissue distribution, only found to be expressed in thymus.

Its subcellular location is the mitochondrion. Functionally, may play an important role in mediating p53/TP53-dependent apoptosis. The sequence is that of p53-regulated apoptosis-inducing protein 1 (TP53AIP1) from Homo sapiens (Human).